We begin with the raw amino-acid sequence, 259 residues long: MLDTTKLTMVGTGSAFSKKFYNNSALVTFTNGYNLLIDCGHSVPKGLHDLGFPLESLDGILITHTHADHIGGLEEVALYNKFVLGGRKIDLLVPEPLVEPLWNDSLNGGLRYDDSRELELDDYFTVRSLKTSDCGAARTQIDENIAFTLYTTLHVSHMKSYAVGLIDRGEEKVFYSSDTVFDEYLLDYALTMFPWVFHDCQLFTGGVHASLDELLGYTRYIPEKQQNKIFLMHYGDNVEEFIGKTGRMRFAEQGREIIL.

The beta-lactamase-like stretch occupies residues 21 to 233; that stretch reads YNNSALVTFT…KQQNKIFLMH (213 aa). 7 residues coordinate Zn(2+): His-64, His-66, Asp-68, His-69, His-154, Asp-178, and His-233.

This sequence belongs to the anti-Pycsar protein Apyc1 family. Homodimer. Requires Zn(2+) as cofactor.

The catalysed reaction is 3',5'-cyclic CMP + H2O = CMP + H(+). The enzyme catalyses 3',5'-cyclic UMP + H2O = UMP + H(+). In terms of biological role, counteracts the host Pycsar antiviral defense system. Phosphodiesterase that enables metal-dependent hydrolysis of host cyclic nucleotide Pycsar defense signals such as cCMP and cUMP. The sequence is that of Anti-Pycsar protein Apyc1 from Bacillus subtilis.